We begin with the raw amino-acid sequence, 468 residues long: UDP-N-acetylmuramate--L-alanine ligase (468 aa).

ATP is bound at residue 121-127; that stretch reads GSHGKTT.

This sequence belongs to the MurCDEF family.

It is found in the cytoplasm. It catalyses the reaction UDP-N-acetyl-alpha-D-muramate + L-alanine + ATP = UDP-N-acetyl-alpha-D-muramoyl-L-alanine + ADP + phosphate + H(+). Its pathway is cell wall biogenesis; peptidoglycan biosynthesis. Functionally, cell wall formation. This is UDP-N-acetylmuramate--L-alanine ligase from Borrelia garinii subsp. bavariensis (strain ATCC BAA-2496 / DSM 23469 / PBi) (Borreliella bavariensis).